We begin with the raw amino-acid sequence, 536 residues long: Probable protein S-acyltransferase 23 (536 aa).

The tract at residues 1–23 (MDSSEIEVVPLDSNSHQSPTESP) is disordered. Residues 12–23 (DSNSHQSPTESP) are compositionally biased toward polar residues. ANK repeat units follow at residues 57–86 (NGFYALQWAALNNSLHVAQYIIQHGGDVNS), 90–119 (IQQTPLHWAAVKGSIDVADLLLQHGARIEA), 123–153 (NGFRAVHVASQYGQTAFVNHIIVDYAADYNA), 157–186 (EGRSPLHWAAYNGFTETVRLLLFRDACQNR), 190–219 (TGCTPLHWAVIKENVEACTLLVHAGTKEEL), and 225–254 (TGSTPLKLASDKGHRQLALFLSKAMRTRKN). A run of 2 helical transmembrane segments spans residues 270-290 (YAPMLFSLIVILMVLFITSIV) and 298-318 (ITAMVGLWACFGLSCGVYALI). A DHHC domain is found at 363–413 (QLCPTCKIIRPVRSKHCPTCKRCVEQFDHHCPWISNCVGKKNKRYFLVFVI). Catalysis depends on C393, which acts as the S-palmitoyl cysteine intermediate. 2 consecutive transmembrane segments (helical) span residues 407-427 (YFLVFVIMGALTSFVGGTTAV) and 454-474 (AAVFLFFDLLIFIATMTLTIS).

It belongs to the DHHC palmitoyltransferase family. As to expression, expressed in roots, shoots, flowers and pollen.

The protein resides in the golgi apparatus membrane. The catalysed reaction is L-cysteinyl-[protein] + hexadecanoyl-CoA = S-hexadecanoyl-L-cysteinyl-[protein] + CoA. Its function is as follows. Palmitoyl acyltransferase. This chain is Probable protein S-acyltransferase 23 (PAT23), found in Arabidopsis thaliana (Mouse-ear cress).